The primary structure comprises 107 residues: Putative septation protein SpoVG (107 aa).

The interval 82-107 (ETDEVIPDKNAQPSSDSEDNGSEEEA) is disordered. Positions 97–107 (DSEDNGSEEEA) are enriched in acidic residues.

Belongs to the SpoVG family.

Could be involved in septation. The sequence is that of Putative septation protein SpoVG from Staphylococcus carnosus (strain TM300).